A 242-amino-acid chain; its full sequence is Purine nucleoside phosphorylase SCO2081 (242 aa).

Positions 68, 106, and 123 each coordinate Zn(2+).

This sequence belongs to the purine nucleoside phosphorylase YfiH/LACC1 family. Homodimer. The cofactor is Cu(2+). Zn(2+) serves as cofactor.

The enzyme catalyses adenosine + phosphate = alpha-D-ribose 1-phosphate + adenine. It carries out the reaction S-methyl-5'-thioadenosine + phosphate = 5-(methylsulfanyl)-alpha-D-ribose 1-phosphate + adenine. The catalysed reaction is inosine + phosphate = alpha-D-ribose 1-phosphate + hypoxanthine. It catalyses the reaction adenosine + H2O + H(+) = inosine + NH4(+). In terms of biological role, purine nucleoside enzyme that catalyzes the phosphorolysis of adenosine and inosine nucleosides, yielding D-ribose 1-phosphate and the respective free bases, adenine and hypoxanthine. Also catalyzes the phosphorolysis of S-methyl-5'-thioadenosine into adenine and S-methyl-5-thio-alpha-D-ribose 1-phosphate. Also has adenosine deaminase activity. The chain is Purine nucleoside phosphorylase SCO2081 from Streptomyces coelicolor (strain ATCC BAA-471 / A3(2) / M145).